The sequence spans 144 residues: uncharacterized protein (144 aa).

The region spanning Ile2–Leu144 is the N-acetyltransferase domain.

It belongs to the acetyltransferase family.

It localises to the cytoplasm. The protein resides in the nucleus. This is an uncharacterized protein from Schizosaccharomyces pombe (strain 972 / ATCC 24843) (Fission yeast).